The primary structure comprises 282 residues: Biotin synthase (282 aa).

A Radical SAM core domain is found at 1–228; the sequence is MQEIFLCSIS…NARLMVAGGR (228 aa). Residues cysteine 17, cysteine 21, and cysteine 24 each coordinate [4Fe-4S] cluster. [2Fe-2S] cluster-binding residues include cysteine 61, cysteine 96, cysteine 154, and arginine 221.

The protein belongs to the radical SAM superfamily. Biotin synthase family. In terms of assembly, homodimer. It depends on [4Fe-4S] cluster as a cofactor. The cofactor is [2Fe-2S] cluster.

It catalyses the reaction (4R,5S)-dethiobiotin + (sulfur carrier)-SH + 2 reduced [2Fe-2S]-[ferredoxin] + 2 S-adenosyl-L-methionine = (sulfur carrier)-H + biotin + 2 5'-deoxyadenosine + 2 L-methionine + 2 oxidized [2Fe-2S]-[ferredoxin]. Its pathway is cofactor biosynthesis; biotin biosynthesis; biotin from 7,8-diaminononanoate: step 2/2. Catalyzes the conversion of dethiobiotin (DTB) to biotin by the insertion of a sulfur atom into dethiobiotin via a radical-based mechanism. The protein is Biotin synthase of Helicobacter pylori (strain ATCC 700392 / 26695) (Campylobacter pylori).